Here is a 278-residue protein sequence, read N- to C-terminus: Bifunctional protein FolD (278 aa).

NADP(+)-binding positions include 164-166 (GRS) and Thr228.

It belongs to the tetrahydrofolate dehydrogenase/cyclohydrolase family. As to quaternary structure, homodimer.

The enzyme catalyses (6R)-5,10-methylene-5,6,7,8-tetrahydrofolate + NADP(+) = (6R)-5,10-methenyltetrahydrofolate + NADPH. The catalysed reaction is (6R)-5,10-methenyltetrahydrofolate + H2O = (6R)-10-formyltetrahydrofolate + H(+). It participates in one-carbon metabolism; tetrahydrofolate interconversion. Catalyzes the oxidation of 5,10-methylenetetrahydrofolate to 5,10-methenyltetrahydrofolate and then the hydrolysis of 5,10-methenyltetrahydrofolate to 10-formyltetrahydrofolate. The chain is Bifunctional protein FolD from Mycoplasmopsis synoviae (strain 53) (Mycoplasma synoviae).